The sequence spans 701 residues: Polyribonucleotide nucleotidyltransferase (701 aa).

The Mg(2+) site is built by Asp-487 and Asp-493. One can recognise a KH domain in the interval 554-613; it reads PTMLQMKIDSDKIRDVIGKGGATIRAICEETKASIDIEDDGSVKIYGETKEAAEAAKQRV. An S1 motif domain is found at 623-691; the sequence is GKIYVGKVER…NRGRIKLSIK (69 aa).

Belongs to the polyribonucleotide nucleotidyltransferase family. Component of the RNA degradosome, which is a multiprotein complex involved in RNA processing and mRNA degradation. The cofactor is Mg(2+).

It is found in the cytoplasm. It catalyses the reaction RNA(n+1) + phosphate = RNA(n) + a ribonucleoside 5'-diphosphate. Its function is as follows. Involved in mRNA degradation. Catalyzes the phosphorolysis of single-stranded polyribonucleotides processively in the 3'- to 5'-direction. This is Polyribonucleotide nucleotidyltransferase from Pseudomonas paraeruginosa (strain DSM 24068 / PA7) (Pseudomonas aeruginosa (strain PA7)).